The following is a 392-amino-acid chain: Nicotinate phosphoribosyltransferase (392 aa).

His216 carries the post-translational modification Phosphohistidine; by autocatalysis.

This sequence belongs to the NAPRTase family. Post-translationally, transiently phosphorylated on a His residue during the reaction cycle. Phosphorylation strongly increases the affinity for substrates and increases the rate of nicotinate D-ribonucleotide production. Dephosphorylation regenerates the low-affinity form of the enzyme, leading to product release.

The catalysed reaction is nicotinate + 5-phospho-alpha-D-ribose 1-diphosphate + ATP + H2O = nicotinate beta-D-ribonucleotide + ADP + phosphate + diphosphate. The protein operates within cofactor biosynthesis; NAD(+) biosynthesis; nicotinate D-ribonucleotide from nicotinate: step 1/1. Catalyzes the synthesis of beta-nicotinate D-ribonucleotide from nicotinate and 5-phospho-D-ribose 1-phosphate at the expense of ATP. The protein is Nicotinate phosphoribosyltransferase of Cupriavidus necator (strain ATCC 17699 / DSM 428 / KCTC 22496 / NCIMB 10442 / H16 / Stanier 337) (Ralstonia eutropha).